A 303-amino-acid chain; its full sequence is Taste receptor type 2 member 13 (303 aa).

Residues 1-7 are Extracellular-facing; the sequence is MESALPS. A helical transmembrane segment spans residues 8–28; it reads ILTLVIIAEFIIGNLSNGFIV. The Cytoplasmic segment spans residues 29–55; that stretch reads LINYIDWVSKRELSSVDKLLIILAISR. Residues 56–76 traverse the membrane as a helical segment; the sequence is IGLIWEILVSWFLALHYLAIF. At 77–85 the chain is on the extracellular side; it reads VSGTGLRIM. The chain crosses the membrane as a helical span at residues 86 to 106; that stretch reads IFSWIVSNHFSLWLATILSIF. Over 107 to 128 the chain is Cytoplasmic; it reads YLLKIASFSSPAFLYLKWRVNK. A helical transmembrane segment spans residues 129–149; the sequence is VILMILLGSLVFLFLNLIQIN. Residues 150 to 184 lie on the Extracellular side of the membrane; the sequence is IHIKDWLDRYEGNTTWNFSMSDFVTFSVSVKFTMT. N-linked (GlcNAc...) asparagine glycans are attached at residues N162 and N166. Residues 185–205 form a helical membrane-spanning segment; sequence MFSLTPFTVALISFSLLIFSL. Topologically, residues 206-232 are cytoplasmic; sequence QKHLQKMQLNYKGHREPRTKVHTNALK. The helical transmembrane segment at 233–253 threads the bilayer; that stretch reads IVISFLLLYASFFLCILISWI. Residues 254–261 are Extracellular-facing; that stretch reads SELYQNTA. The chain crosses the membrane as a helical span at residues 262–282; that stretch reads IYMLCETIGLFYPSSHSFLLI. At 283-303 the chain is on the cytoplasmic side; it reads LGNPKLRQAFLLVAAKVWAKR.

It belongs to the G-protein coupled receptor T2R family.

Its subcellular location is the membrane. In terms of biological role, receptor that may play a role in the perception of bitterness and is gustducin-linked. May play a role in sensing the chemical composition of the gastrointestinal content. The activity of this receptor may stimulate alpha gustducin, mediate PLC-beta-2 activation and lead to the gating of TRPM5. This is Taste receptor type 2 member 13 (TAS2R13) from Pongo pygmaeus (Bornean orangutan).